Consider the following 103-residue polypeptide: Putative membrane protein insertion efficiency factor (103 aa).

It belongs to the UPF0161 family.

The protein resides in the cell membrane. Functionally, could be involved in insertion of integral membrane proteins into the membrane. This is Putative membrane protein insertion efficiency factor from Clavibacter michiganensis subsp. michiganensis (strain NCPPB 382).